The following is a 156-amino-acid chain: Glutamate-rich protein 2 (156 aa).

Disordered stretches follow at residues 29 to 66 (LQDI…TQAP) and 116 to 156 (EKTQ…EDGS). Acidic residues-rich tracts occupy residues 39-56 (SAED…DDED) and 140-156 (SDEE…EDGS).

In Homo sapiens (Human), this protein is Glutamate-rich protein 2 (ERICH2).